The chain runs to 439 residues: Hemagglutinin-esterase (439 aa).

Residues Met1–Val22 form the signal peptide. The esterase domain 1 stretch occupies residues Thr12–Ala132. Topologically, residues Phe23 to Val407 are virion surface. Ser45 serves as the catalytic Nucleophile. The cysteines at positions 49 and 70 are disulfide-linked. Asn94, Asn152, Asn196, Asn246, Asn309, and Asn316 each carry an N-linked (GlcNAc...) asparagine; by host glycan. Cys118 and Cys167 are joined by a disulfide. Residues Arg133–Tyr281 form a receptor binding region. Cystine bridges form between Cys202-Cys291 and Cys210-Cys264. Residues Leu282 to Tyr395 are esterase domain 2. Cys322 and Cys327 are oxidised to a cystine. N-linked (GlcNAc...) asparagine; by host glycosylation is present at Asn331. Active-site charge relay system residues include Asp342 and His345. Residues Asn360 and Asn374 are each glycosylated (N-linked (GlcNAc...) asparagine; by host). Cysteines 363 and 387 form a disulfide. Residues Ile408–Phe428 form a helical membrane-spanning segment. At Met429–Ala439 the chain is on the intravirion side.

Belongs to the influenza type C/coronaviruses hemagglutinin-esterase family. In terms of assembly, homodimer; disulfide-linked. Forms a complex with the M protein in the pre-Golgi. Associates then with S-M complex to form a ternary complex S-M-HE. In terms of processing, N-glycosylated in the host RER.

It is found in the virion membrane. The protein resides in the host cell membrane. The enzyme catalyses N-acetyl-9-O-acetylneuraminate + H2O = N-acetylneuraminate + acetate + H(+). It carries out the reaction N-acetyl-4-O-acetylneuraminate + H2O = N-acetylneuraminate + acetate + H(+). Structural protein that makes short spikes at the surface of the virus. Contains receptor binding and receptor-destroying activities. Mediates de-O-acetylation of N-acetyl-4-O-acetylneuraminic acid, which is probably the receptor determinant recognized by the virus on the surface of erythrocytes and susceptible cells. This receptor-destroying activity is important for virus release as it probably helps preventing self-aggregation and ensures the efficient spread of the progeny virus from cell to cell. May serve as a secondary viral attachment protein for initiating infection, the spike protein being the major one. May become a target for both the humoral and the cellular branches of the immune system. This Murine coronavirus (strain S) (MHV-S) protein is Hemagglutinin-esterase.